The chain runs to 377 residues: Glutamate 5-kinase (377 aa).

Lys-20 is a binding site for ATP. Ser-59, Asp-146, and Asn-158 together coordinate substrate. ATP contacts are provided by residues Ser-178 to Asp-179 and Thr-220 to Lys-226. A PUA domain is found at Arg-285 to Arg-363.

Belongs to the glutamate 5-kinase family.

The protein localises to the cytoplasm. The enzyme catalyses L-glutamate + ATP = L-glutamyl 5-phosphate + ADP. It participates in amino-acid biosynthesis; L-proline biosynthesis; L-glutamate 5-semialdehyde from L-glutamate: step 1/2. Its function is as follows. Catalyzes the transfer of a phosphate group to glutamate to form L-glutamate 5-phosphate. In Myxococcus xanthus (strain DK1622), this protein is Glutamate 5-kinase.